The primary structure comprises 99 residues: Integration host factor subunit alpha (99 aa).

Belongs to the bacterial histone-like protein family. In terms of assembly, heterodimer of an alpha and a beta chain.

Its function is as follows. This protein is one of the two subunits of integration host factor, a specific DNA-binding protein that functions in genetic recombination as well as in transcriptional and translational control. The sequence is that of Integration host factor subunit alpha from Xylella fastidiosa (strain M12).